A 637-amino-acid polypeptide reads, in one-letter code: Probable ATP-binding protein YheS (637 aa).

ABC transporter domains follow at residues 2–246 and 313–527; these read IVFS…AQQQ and LKME…KQEN. ATP-binding positions include 34–41 and 345–352; these read GKNGCGKS and GRNGAGKS. The tract at residues 523-559 is disordered; the sequence is QKQENQTDEAPKENANSAQARKDQKRREAELRAQTQP. Over residues 542–553 the composition is skewed to basic and acidic residues; sequence ARKDQKRREAEL.

The protein belongs to the ABC transporter superfamily. ABCF family. YheS subfamily.

Functionally, genetic data indicate it may be involved in ribosome assembly or function. Ectopic expression exacerbates the cold-sensitive growth phenotype of a bipA deletion. The chain is Probable ATP-binding protein YheS (yheS) from Escherichia coli O6:H1 (strain CFT073 / ATCC 700928 / UPEC).